Reading from the N-terminus, the 245-residue chain is tRNA pseudouridine synthase A 2 (245 aa).

The active-site Nucleophile is the Asp-53. Substrate is bound at residue Tyr-111.

It belongs to the tRNA pseudouridine synthase TruA family. As to quaternary structure, homodimer.

It catalyses the reaction uridine(38/39/40) in tRNA = pseudouridine(38/39/40) in tRNA. Formation of pseudouridine at positions 38, 39 and 40 in the anticodon stem and loop of transfer RNAs. The chain is tRNA pseudouridine synthase A 2 from Bacillus cereus (strain ZK / E33L).